The primary structure comprises 480 residues: Aspartyl/glutamyl-tRNA(Asn/Gln) amidotransferase subunit B (480 aa).

The protein belongs to the GatB/GatE family. GatB subfamily. In terms of assembly, heterotrimer of A, B and C subunits.

The enzyme catalyses L-glutamyl-tRNA(Gln) + L-glutamine + ATP + H2O = L-glutaminyl-tRNA(Gln) + L-glutamate + ADP + phosphate + H(+). It catalyses the reaction L-aspartyl-tRNA(Asn) + L-glutamine + ATP + H2O = L-asparaginyl-tRNA(Asn) + L-glutamate + ADP + phosphate + 2 H(+). Its function is as follows. Allows the formation of correctly charged Asn-tRNA(Asn) or Gln-tRNA(Gln) through the transamidation of misacylated Asp-tRNA(Asn) or Glu-tRNA(Gln) in organisms which lack either or both of asparaginyl-tRNA or glutaminyl-tRNA synthetases. The reaction takes place in the presence of glutamine and ATP through an activated phospho-Asp-tRNA(Asn) or phospho-Glu-tRNA(Gln). In Streptococcus pneumoniae (strain Hungary19A-6), this protein is Aspartyl/glutamyl-tRNA(Asn/Gln) amidotransferase subunit B.